The chain runs to 466 residues: Anthocyanidin 3-O-glucosyltransferase 1 (466 aa).

Catalysis depends on His-22, which acts as the Proton acceptor. An anthocyanidin contacts are provided by His-22 and Gln-87. Asp-122 (charge relay) is an active-site residue. Residue Thr-145 coordinates UDP-alpha-D-glucose. His-154 is an an anthocyanidin binding site. 7 residues coordinate UDP-alpha-D-glucose: Ala-346, Gln-348, His-363, Trp-366, Asn-367, Ser-368, and Glu-371. Residue Gly-386 coordinates an anthocyanidin. UDP-alpha-D-glucose-binding residues include Asp-387 and Gln-388.

The protein belongs to the UDP-glycosyltransferase family. In terms of tissue distribution, highest expression detected in receptacles and achenes, with very low levels detected in runners, leaves, flowers, crowns and green receptacles.

The catalysed reaction is an anthocyanidin + UDP-alpha-D-glucose + H(+) = an anthocyanidin 3-O-beta-D-glucoside + UDP. It catalyses the reaction cyanidin + UDP-alpha-D-glucose = cyanidin 3-O-beta-D-glucoside + UDP + H(+). The enzyme catalyses pelargonidin + UDP-alpha-D-glucose = pelargonidin 3-O-beta-D-glucoside + UDP. It carries out the reaction peonidin + UDP-alpha-D-glucose = peonidin 3-O-beta-D-glucoside + UDP. The catalysed reaction is delphinidin + UDP-alpha-D-glucose = delphinidin 3-O-beta-D-glucoside + UDP. It catalyses the reaction a flavonol + UDP-alpha-D-glucose = a flavonol 3-O-beta-D-glucoside + UDP + H(+). Its pathway is pigment biosynthesis; anthocyanin biosynthesis. In the presence of other necessary color factors, this glycosylation reaction allows the accumulation of anthocyanin pigments. Uses UDP-Glc as a sugar donor, but not UDP-Gal or UDP-GlcUA. Anthocyanidins are the preferred substrates in vivo, but flavonols can also be glucosylated in vitro. This Fragaria ananassa (Strawberry) protein is Anthocyanidin 3-O-glucosyltransferase 1.